Consider the following 1086-residue polypeptide: Isoleucine--tRNA ligase (1086 aa).

The 'HIGH' region signature appears at 53 to 63 (PFANGLPHYGH). Residues 624-628 (KLSKR) carry the 'KMSKS' region motif. K627 serves as a coordination point for ATP.

Belongs to the class-I aminoacyl-tRNA synthetase family. IleS type 2 subfamily. As to quaternary structure, monomer. Zn(2+) is required as a cofactor.

It localises to the cytoplasm. The catalysed reaction is tRNA(Ile) + L-isoleucine + ATP = L-isoleucyl-tRNA(Ile) + AMP + diphosphate. Catalyzes the attachment of isoleucine to tRNA(Ile). As IleRS can inadvertently accommodate and process structurally similar amino acids such as valine, to avoid such errors it has two additional distinct tRNA(Ile)-dependent editing activities. One activity is designated as 'pretransfer' editing and involves the hydrolysis of activated Val-AMP. The other activity is designated 'posttransfer' editing and involves deacylation of mischarged Val-tRNA(Ile). The polypeptide is Isoleucine--tRNA ligase (Rickettsia prowazekii (strain Madrid E)).